We begin with the raw amino-acid sequence, 472 residues long: Pentatricopeptide repeat-containing protein At5g46100 (472 aa).

11 PPR repeats span residues 50 to 84, 85 to 119, 120 to 154, 155 to 190, 191 to 225, 226 to 260, 261 to 295, 296 to 330, 331 to 365, 373 to 406, and 407 to 441; these read DQSS…NCVV, SEDI…DCDP, SQKA…GLPP, TVAS…GCDP, DSYT…DCAP, TVVT…GIEP, NVFT…GCRP, NMVT…GLKP, DAGL…GITP, HVKT…GISV, and EVET…GCIP.

This sequence belongs to the PPR family. P subfamily.

In Arabidopsis thaliana (Mouse-ear cress), this protein is Pentatricopeptide repeat-containing protein At5g46100.